Consider the following 176-residue polypeptide: Xanthine-guanine phosphoribosyltransferase (176 aa).

Residues 51–52 (RG), Arg88, and 111–119 (DDLVDSGKT) contribute to the 5-phospho-alpha-D-ribose 1-diphosphate site. GMP is bound at residue Arg88. Mg(2+) is bound at residue Asp112. 2 residues coordinate guanine: Asp115 and Ile158. Xanthine contacts are provided by Asp115 and Ile158. GMP is bound by residues 115 to 119 (DSGKT) and 157 to 158 (WI).

The protein belongs to the purine/pyrimidine phosphoribosyltransferase family. XGPT subfamily. As to quaternary structure, homotetramer. It depends on Mg(2+) as a cofactor.

The protein resides in the cell inner membrane. It carries out the reaction GMP + diphosphate = guanine + 5-phospho-alpha-D-ribose 1-diphosphate. The enzyme catalyses XMP + diphosphate = xanthine + 5-phospho-alpha-D-ribose 1-diphosphate. It catalyses the reaction IMP + diphosphate = hypoxanthine + 5-phospho-alpha-D-ribose 1-diphosphate. It participates in purine metabolism; GMP biosynthesis via salvage pathway; GMP from guanine: step 1/1. The protein operates within purine metabolism; XMP biosynthesis via salvage pathway; XMP from xanthine: step 1/1. In terms of biological role, purine salvage pathway enzyme that catalyzes the transfer of the ribosyl-5-phosphate group from 5-phospho-alpha-D-ribose 1-diphosphate (PRPP) to the N9 position of the 6-oxopurines guanine and xanthine to form the corresponding ribonucleotides GMP (guanosine 5'-monophosphate) and XMP (xanthosine 5'-monophosphate), with the release of PPi. To a lesser extent, also acts on hypoxanthine. The sequence is that of Xanthine-guanine phosphoribosyltransferase from Ruegeria sp. (strain TM1040) (Silicibacter sp.).